The following is an 800-amino-acid chain: Signaling protein YkoW (800 aa).

Helical transmembrane passes span 5–27, 44–66, 76–98, 103–125, 135–157, 178–200, and 215–237; these read VTYNTTLICLSILIACTASYISL, WLIGGSLIMGFGIWSMHFVGMMA, EFMPLMAAIGASVSGSFVSLYFV, LTYYRLLTGSVVLGASIASMHYI, IIYEPILFTVSIIIAIAASFVSL, VSSIVMGIGISGMHYTGMLAATF, and TFHWSIFVTLIIFCIQTLLLFSS. The MHYT domain occupies 7–201; it reads YNTTLICLSI…YTGMLAATFH (195 aa). In terms of domain architecture, PAS spans 255 to 319; sequence QRFQSLIVHN…FEQVKKDKQA (65 aa). Residues 402–536 form the GGDEF domain; it reads YNTVVFFLDL…NKSKYRYYSF (135 aa). The EAL domain maps to 545-798; it reads KLNQEMVLRE…QFEQFIIEQP (254 aa).

It is found in the cell membrane. Its function is as follows. Probable signaling protein whose physiological role is not yet known. The polypeptide is Signaling protein YkoW (ykoW) (Bacillus subtilis (strain 168)).